The chain runs to 500 residues: Aspartyl/glutamyl-tRNA(Asn/Gln) amidotransferase subunit B (500 aa).

It belongs to the GatB/GatE family. GatB subfamily. In terms of assembly, heterotrimer of A, B and C subunits.

It carries out the reaction L-glutamyl-tRNA(Gln) + L-glutamine + ATP + H2O = L-glutaminyl-tRNA(Gln) + L-glutamate + ADP + phosphate + H(+). The enzyme catalyses L-aspartyl-tRNA(Asn) + L-glutamine + ATP + H2O = L-asparaginyl-tRNA(Asn) + L-glutamate + ADP + phosphate + 2 H(+). Allows the formation of correctly charged Asn-tRNA(Asn) or Gln-tRNA(Gln) through the transamidation of misacylated Asp-tRNA(Asn) or Glu-tRNA(Gln) in organisms which lack either or both of asparaginyl-tRNA or glutaminyl-tRNA synthetases. The reaction takes place in the presence of glutamine and ATP through an activated phospho-Asp-tRNA(Asn) or phospho-Glu-tRNA(Gln). The chain is Aspartyl/glutamyl-tRNA(Asn/Gln) amidotransferase subunit B from Allorhizobium ampelinum (strain ATCC BAA-846 / DSM 112012 / S4) (Agrobacterium vitis (strain S4)).